The following is a 279-amino-acid chain: Diaminopimelate epimerase (279 aa).

N12, Q45, and N65 together coordinate substrate. The Proton donor role is filled by C74. Substrate is bound by residues 75 to 76, N162, N195, and 213 to 214; these read GN and ER. Residue C222 is the Proton acceptor of the active site. A substrate-binding site is contributed by 223 to 224; the sequence is GS.

Belongs to the diaminopimelate epimerase family. In terms of assembly, homodimer.

It is found in the cytoplasm. The catalysed reaction is (2S,6S)-2,6-diaminopimelate = meso-2,6-diaminopimelate. It functions in the pathway amino-acid biosynthesis; L-lysine biosynthesis via DAP pathway; DL-2,6-diaminopimelate from LL-2,6-diaminopimelate: step 1/1. Functionally, catalyzes the stereoinversion of LL-2,6-diaminopimelate (L,L-DAP) to meso-diaminopimelate (meso-DAP), a precursor of L-lysine and an essential component of the bacterial peptidoglycan. This is Diaminopimelate epimerase from Shewanella loihica (strain ATCC BAA-1088 / PV-4).